The sequence spans 572 residues: Putative inorganic phosphate transporter C8E4.01c (572 aa).

Residues 1-47 (MAFGSKILNIGSKSDEYNDDAVPLDQVEEGAQERRYYLGLTKREFKL) are Cytoplasmic-facing. Phosphoserine is present on residues Ser12 and Ser14. A helical membrane pass occupies residues 48-68 (MMLAGVGFFLDSYDLFIINLV). At 69-99 (TPIFEYLYWGGIEKGPTGKGHYPSGIRGLVN) the chain is on the extracellular side. Residues 100-120 (ASANIGNIFGQLLFGFMGDFF) form a helical membrane-spanning segment. Over 121–123 (GRK) the chain is Cytoplasmic. A helical membrane pass occupies residues 124–144 (FVYGKEMVIVIIATVLVIAMP). Topologically, residues 145–153 (KSIHSPLSK) are extracellular. The chain crosses the membrane as a helical span at residues 154 to 174 (MMWVFCWRWLLGVGIGGDYPM). The Cytoplasmic segment spans residues 175 to 193 (SAAITSERSKIKRRGTLIS). The chain crosses the membrane as a helical span at residues 194–214 (LIFAFQGFGTLAGAIVTIILL). Topologically, residues 215 to 229 (GCFEHPLNREGHYHK) are extracellular. Residues 230–250 (LEGVWRLQFGLALVPAIGVLI) traverse the membrane as a helical segment. The Cytoplasmic segment spans residues 251–346 (PRLIMKESKS…TYFRQWRHFK (96 aa)). Positions 265 to 297 (KALNSAEGKDPKAFFNTDDEDNMKKSSSHGDSE) are disordered. Basic and acidic residues predominate over residues 286–296 (NMKKSSSHGDS). Phosphoserine occurs at positions 292 and 296. Residues 347-367 (HLLGTSVCWFLLDIAFYGVNL) form a helical membrane-spanning segment. At 368-395 (NQSVILKNIGFSTGTNEYRTLMKNAIGN) the chain is on the extracellular side. The helical transmembrane segment at 396–416 (LIIAVAGYVPGYWFNVFLVEI) threads the bilayer. The Cytoplasmic segment spans residues 417–420 (LGRK). A helical membrane pass occupies residues 421 to 441 (WIQLQGFVITGLMFAILAGRW). The Extracellular segment spans residues 442–449 (NEISTGGR). A helical transmembrane segment spans residues 450–470 (FACFVIAQLFSNFGPNSTTFI). The Cytoplasmic portion of the chain corresponds to 471–485 (YPAEVFPARVRGTAH). Residues 486 to 506 (GVSAALGKCGAILASLLFNFL) traverse the membrane as a helical segment. The Extracellular segment spans residues 507 to 508 (TG). A helical membrane pass occupies residues 509–529 (VIGYGNVMWIFCGCMWGGILF). At 530-572 (TLLLPETKGRDADEIDRLELFYGKDGKVQCDSKWKSWYFNGIF) the chain is on the cytoplasmic side.

Belongs to the major facilitator superfamily. Sugar transporter (TC 2.A.1.1) family.

Its subcellular location is the membrane. Functionally, high-affinity transporter for external inorganic phosphate. The sequence is that of Putative inorganic phosphate transporter C8E4.01c from Schizosaccharomyces pombe (strain 972 / ATCC 24843) (Fission yeast).